The chain runs to 363 residues: MLLCSMVAALAALATPAFSCALPHLDLPEDNSGLDIKLDSLSNTRVKATITNKADRPLNLLKFNTFFDDGPTEKVGIFKDGNPIKFDGIMRRIQTFDLPISAFVPISPGESIEREFDIASTSDLTVGGAFDILSEGAIPYAEANQTTLTGAMVFKSNALQLKIDGEMAATVARAIQPLDRRSDVHVCRNSAKRKALMKALRNSAHLAGTAASAAYRNPRKVQEYFHTTDRTAVRSVAARLKAISRESGSTRNGATRYACEDHWNRCEPGVLAYTLPSHNLVVNCPSFYNLPALTNRCHGQDQATTVLHEFAHAPGVHEPFCKDHAYGYRSIRRLSTRLALNNADSFSLFANGRFRRRFRVIST.

Positions 1 to 19 (MLLCSMVAALAALATPAFS) are cleaved as a signal peptide. The propeptide occupies 20 to 181 (CALPHLDLPE…ARAIQPLDRR (162 aa)). Intrachain disulfides connect Cys-187–Cys-259 and Cys-266–Cys-284. Residue His-308 coordinates Zn(2+). Residue Glu-309 is part of the active site. Residues His-312 and Asp-323 each contribute to the Zn(2+) site.

The protein belongs to the peptidase M35 family. The cofactor is Zn(2+).

The protein resides in the secreted. It carries out the reaction Preferential cleavage of bonds with hydrophobic residues in P1'. Also 3-Asn-|-Gln-4 and 8-Gly-|-Ser-9 bonds in insulin B chain.. Secreted metalloproteinase that allows assimilation of proteinaceous substrates. Shows high activities on basic nuclear substrates such as histone and protamine. May be involved in virulence. The sequence is that of Neutral protease 2 homolog MEP7 (MEP7) from Coccidioides posadasii (strain C735) (Valley fever fungus).